The primary structure comprises 119 residues: Large ribosomal subunit protein bL20 (119 aa).

It belongs to the bacterial ribosomal protein bL20 family.

Binds directly to 23S ribosomal RNA and is necessary for the in vitro assembly process of the 50S ribosomal subunit. It is not involved in the protein synthesizing functions of that subunit. In Acidovorax sp. (strain JS42), this protein is Large ribosomal subunit protein bL20.